The following is a 298-amino-acid chain: Lipoyl synthase (298 aa).

7 residues coordinate [4Fe-4S] cluster: Cys40, Cys45, Cys51, Cys67, Cys71, Cys74, and Ser280. Residues 53-269 enclose the Radical SAM core domain; the sequence is AVRRTATFMI…KEIALSKGFS (217 aa).

It belongs to the radical SAM superfamily. Lipoyl synthase family. [4Fe-4S] cluster is required as a cofactor.

The protein localises to the cytoplasm. The catalysed reaction is [[Fe-S] cluster scaffold protein carrying a second [4Fe-4S](2+) cluster] + N(6)-octanoyl-L-lysyl-[protein] + 2 oxidized [2Fe-2S]-[ferredoxin] + 2 S-adenosyl-L-methionine + 4 H(+) = [[Fe-S] cluster scaffold protein] + N(6)-[(R)-dihydrolipoyl]-L-lysyl-[protein] + 4 Fe(3+) + 2 hydrogen sulfide + 2 5'-deoxyadenosine + 2 L-methionine + 2 reduced [2Fe-2S]-[ferredoxin]. The protein operates within protein modification; protein lipoylation via endogenous pathway; protein N(6)-(lipoyl)lysine from octanoyl-[acyl-carrier-protein]. Functionally, catalyzes the radical-mediated insertion of two sulfur atoms into the C-6 and C-8 positions of the octanoyl moiety bound to the lipoyl domains of lipoate-dependent enzymes, thereby converting the octanoylated domains into lipoylated derivatives. In Geobacillus kaustophilus (strain HTA426), this protein is Lipoyl synthase.